The primary structure comprises 240 residues: tRNA (guanine-N(1)-)-methyltransferase (240 aa).

Residues glycine 110 and 129 to 134 (LGDFVL) each bind S-adenosyl-L-methionine.

It belongs to the RNA methyltransferase TrmD family. As to quaternary structure, homodimer.

The protein localises to the cytoplasm. The enzyme catalyses guanosine(37) in tRNA + S-adenosyl-L-methionine = N(1)-methylguanosine(37) in tRNA + S-adenosyl-L-homocysteine + H(+). Its function is as follows. Specifically methylates guanosine-37 in various tRNAs. The protein is tRNA (guanine-N(1)-)-methyltransferase of Clostridium botulinum (strain Loch Maree / Type A3).